A 366-amino-acid polypeptide reads, in one-letter code: Cobalt-precorrin-5B C(1)-methyltransferase (366 aa).

This sequence belongs to the CbiD family.

The enzyme catalyses Co-precorrin-5B + S-adenosyl-L-methionine = Co-precorrin-6A + S-adenosyl-L-homocysteine. It participates in cofactor biosynthesis; adenosylcobalamin biosynthesis; cob(II)yrinate a,c-diamide from sirohydrochlorin (anaerobic route): step 6/10. In terms of biological role, catalyzes the methylation of C-1 in cobalt-precorrin-5B to form cobalt-precorrin-6A. This chain is Cobalt-precorrin-5B C(1)-methyltransferase, found in Pseudomonas paraeruginosa (strain DSM 24068 / PA7) (Pseudomonas aeruginosa (strain PA7)).